The following is a 337-amino-acid chain: Retrovirus-related Pol polyprotein from type-1 retrotransposable element R1 (337 aa).

A Reverse transcriptase domain is found at Gly1–Met118. The nucleic acid-binding endonuclease stretch occupies residues Lys253–Asp337.

The enzyme catalyses DNA(n) + a 2'-deoxyribonucleoside 5'-triphosphate = DNA(n+1) + diphosphate. In Nasonia vitripennis (Parasitic wasp), this protein is Retrovirus-related Pol polyprotein from type-1 retrotransposable element R1.